The following is a 369-amino-acid chain: MNRPYNFSAGPAAIPAEVLQQAAAEMLDWHGSGMSVMEMSHRGKEFISIYEQAEADLRELLAVPPEFKILFMQGGGLAENAIVPLNLSRAGTVDFVLSGSWSQKSAKEARKYVADAHIAASGEDGKFTALPAPESWQLSRGASYVHICSNETIHGVEFQELPDLKALGCDAPLVVDFSSHVASRPVDWSRVGLAFGGAQKNLGPAGLTLVIVREDLLGHALPACPSAFDYKTVADNQSMYNTPPTWGIYIAGLTFQWIKRQTEGGLTGVAALEARNIAKADLFYQYVDQSSFYVNKVAANCRSRMNIPFFLRDESRNDAFLAGARERGLLQLKGHKSVGGMRASIYNAMPIAGVQALVEYMREFEQRNA.

Residue arginine 42 coordinates L-glutamate. Positions 101, 152, 176, and 199 each coordinate pyridoxal 5'-phosphate. Position 200 is an N6-(pyridoxal phosphate)lysine (lysine 200). 241-242 (NT) serves as a coordination point for pyridoxal 5'-phosphate.

Belongs to the class-V pyridoxal-phosphate-dependent aminotransferase family. SerC subfamily. Homodimer. Pyridoxal 5'-phosphate is required as a cofactor.

Its subcellular location is the cytoplasm. The catalysed reaction is O-phospho-L-serine + 2-oxoglutarate = 3-phosphooxypyruvate + L-glutamate. It catalyses the reaction 4-(phosphooxy)-L-threonine + 2-oxoglutarate = (R)-3-hydroxy-2-oxo-4-phosphooxybutanoate + L-glutamate. It functions in the pathway amino-acid biosynthesis; L-serine biosynthesis; L-serine from 3-phospho-D-glycerate: step 2/3. It participates in cofactor biosynthesis; pyridoxine 5'-phosphate biosynthesis; pyridoxine 5'-phosphate from D-erythrose 4-phosphate: step 3/5. Its function is as follows. Catalyzes the reversible conversion of 3-phosphohydroxypyruvate to phosphoserine and of 3-hydroxy-2-oxo-4-phosphonooxybutanoate to phosphohydroxythreonine. The chain is Phosphoserine aminotransferase from Delftia acidovorans (strain DSM 14801 / SPH-1).